We begin with the raw amino-acid sequence, 388 residues long: MLNGTTLEAAMLFHGISGGHIQGIMEEMERRSKTEARLAKGTQLNGRDAGMPPLSPEKPALCAGCGGKISDRYYLLAVDKQWHLRCLKCCECKLALESELTCFAKDGSIYCKEDYYRRFSVQRCARCHLGISASEMVMRARDSVYHLSCFTCSTCNKTLTTGDHFGMKDSLVYCRAHFETLLQGEYPPQLSYTELAAKSGGLALPYFNGTGTVQKGRPRKRKSPALGVDIVNYNSGCNENEADHLDRDQQPYPPSQKTKRMRTSFKHHQLRTMKSYFAINHNPDAKDLKQLAQKTGLTKRVLQVWFQNARAKFRRNLLRQENGGVDKADGTSLPAPPSADSGALTPPGTATTLTDLTNPTVTVVTTVTSNMDSHESGSPSQTTLTNLF.

LIM zinc-binding domains follow at residues 69–130 and 131–193; these read ISDR…CHLG and ISAS…LSYT. Disordered stretches follow at residues 239 to 263, 321 to 356, and 369 to 388; these read ENEA…RMRT, ENGG…LTDL, and SNMD…TNLF. The homeobox DNA-binding region spans 267-326; the sequence is HHQLRTMKSYFAINHNPDAKDLKQLAQKTGLTKRVLQVWFQNARAKFRRNLLRQENGGVD. The span at 344–356 shows a compositional bias: low complexity; the sequence is LTPPGTATTLTDL. Polar residues predominate over residues 376–388; it reads SGSPSQTTLTNLF.

Interacts with LDB1 and LDB2.

It is found in the nucleus. Its function is as follows. Involved in gonadal development. This Rattus norvegicus (Rat) protein is LIM/homeobox protein Lhx9 (Lhx9).